Here is a 1324-residue protein sequence, read N- to C-terminus: Probable phosphoribosylformylglycinamidine synthase (1324 aa).

Residues 314–325, 394–396, and A681 contribute to the ATP site; these read GATTGTGGRIRD and SGF. Mg(2+) contacts are provided by D682, E721, N725, and D894. S896 is an ATP binding site. The region spanning 1053–1295 is the Glutamine amidotransferase type-1 domain; it reads RVAIIREEGS…LTWQWAESSE (243 aa). Catalysis depends on C1146, which acts as the Nucleophile. Catalysis depends on residues H1280 and D1282.

In the N-terminal section; belongs to the FGAMS family.

It localises to the cytoplasm. It carries out the reaction N(2)-formyl-N(1)-(5-phospho-beta-D-ribosyl)glycinamide + L-glutamine + ATP + H2O = 2-formamido-N(1)-(5-O-phospho-beta-D-ribosyl)acetamidine + L-glutamate + ADP + phosphate + H(+). It participates in purine metabolism; IMP biosynthesis via de novo pathway; 5-amino-1-(5-phospho-D-ribosyl)imidazole from N(2)-formyl-N(1)-(5-phospho-D-ribosyl)glycinamide: step 1/2. Its function is as follows. Phosphoribosylformylglycinamidine synthase involved in the purines biosynthetic pathway. Catalyzes the ATP-dependent conversion of formylglycinamide ribonucleotide (FGAR) and glutamine to yield formylglycinamidine ribonucleotide (FGAM) and glutamate. The sequence is that of Probable phosphoribosylformylglycinamidine synthase from Caenorhabditis elegans.